Consider the following 111-residue polypeptide: Prothymosin alpha (111 aa).

Residue Met1 is modified to N-acetylmethionine. Residues 1-111 are disordered; that stretch reads MSDAAVDTSS…TKKQKTEEDD (111 aa). The residue at position 2 (Ser2) is an N-acetylserine; in Prothymosin alpha, N-terminally processed. Ser2 carries the post-translational modification Phosphoserine. Thr8 is subject to Phosphothreonine. Ser9 and Ser10 each carry phosphoserine. Residues Thr13 and Thr14 each carry the phosphothreonine modification. Positions 13-31 are enriched in basic and acidic residues; sequence TTKDLKEKKEVVEEAENGR. The residue at position 15 (Lys15) is an N6-acetyllysine; alternate. Lys15 is modified (N6-succinyllysine; alternate). Residues 43–84 are compositionally biased toward acidic residues; the sequence is ENGEQEADNEVDEEEEEGGEEEEEEEEGDGEEEDGDEDEEAE. Positions 101 to 111 are enriched in basic and acidic residues; sequence DTKKQKTEEDD. Position 102 is a phosphothreonine (Thr102). The residue at position 103 (Lys103) is an N6-acetyllysine; alternate. Lys103 participates in a covalent cross-link: Glycyl lysine isopeptide (Lys-Gly) (interchain with G-Cter in SUMO2); alternate. Thr107 is subject to Phosphothreonine.

Belongs to the pro/parathymosin family. As to quaternary structure, interacts with NUPR1; regulates apoptotic process. Post-translationally, covalently linked to a small RNA of about 20 nucleotides.

It is found in the nucleus. Functionally, prothymosin alpha may mediate immune function by conferring resistance to certain opportunistic infections. This Mus musculus (Mouse) protein is Prothymosin alpha (Ptma).